Consider the following 459-residue polypeptide: uncharacterized protein (459 aa).

Residues 2–60 (NLRVKQKIPLKIKRMGINGEGIGFYKRTLVFVPGALKGEEIFCQITSVKHNFVQARLLT) enclose the TRAM domain. [4Fe-4S] cluster is bound by residues cysteine 73, cysteine 79, cysteine 82, and cysteine 162. Positions 284, 313, 334, and 382 each coordinate S-adenosyl-L-methionine. Catalysis depends on cysteine 409, which acts as the Nucleophile.

The protein belongs to the class I-like SAM-binding methyltransferase superfamily. RNA M5U methyltransferase family.

This is an uncharacterized protein from Streptococcus mutans serotype c (strain ATCC 700610 / UA159).